Consider the following 357-residue polypeptide: Guanine nucleotide-binding protein G(o) subunit alpha (357 aa).

Residue glycine 2 is the site of N-myristoyl glycine attachment. Cysteine 3 carries the S-palmitoyl cysteine lipid modification. In terms of domain architecture, G-alpha spans 32–357 (KDIKLLLLGA…ANNLRGCGLY (326 aa)). The tract at residues 35–48 (KLLLLGAGESGKST) is G1 motif. GTP is bound by residues 40 to 47 (GAGESGKS), 179 to 185 (LRTRVKT), 204 to 208 (DVGGQ), 273 to 276 (NKKD), and alanine 329. Mg(2+) is bound by residues serine 47 and threonine 185. The segment at 177–185 (DILRTRVKT) is G2 motif. A G3 motif region spans residues 200 to 209 (FKLFDVGGQR). Residues 269 to 276 (ILFLNKKD) are G4 motif. The tract at residues 327 to 332 (TCATDT) is G5 motif.

Belongs to the G-alpha family. G(i/o/t/z) subfamily. As to quaternary structure, g proteins are composed of 3 units; alpha, beta and gamma. The alpha chain contains the guanine nucleotide binding site.

Its function is as follows. Guanine nucleotide-binding proteins (G proteins) are involved as modulators or transducers in various transmembrane signaling systems. The G(o) protein function is not clear. This Mizuhopecten yessoensis (Japanese scallop) protein is Guanine nucleotide-binding protein G(o) subunit alpha (SCGOA).